The following is a 132-amino-acid chain: Small ribosomal subunit protein uS11 (132 aa).

Residues 1–16 (MAAGMKGKRSRRRKER) are compositionally biased toward basic residues. A disordered region spans residues 1-20 (MAAGMKGKRSRRRKERKNVE).

Belongs to the universal ribosomal protein uS11 family. As to quaternary structure, part of the 30S ribosomal subunit. Interacts with proteins S7 and S18. Binds to IF-3.

In terms of biological role, located on the platform of the 30S subunit, it bridges several disparate RNA helices of the 16S rRNA. Forms part of the Shine-Dalgarno cleft in the 70S ribosome. This chain is Small ribosomal subunit protein uS11, found in Clostridium botulinum (strain Loch Maree / Type A3).